A 278-amino-acid chain; its full sequence is Shikimate dehydrogenase (NADP(+)) (278 aa).

Residues 19–21 (SFS) and threonine 66 each bind shikimate. Lysine 70 (proton acceptor) is an active-site residue. The shikimate site is built by asparagine 91 and aspartate 106. NADP(+) contacts are provided by residues 130–134 (GSGGA) and leucine 222. Residue tyrosine 224 participates in shikimate binding. Glycine 245 contributes to the NADP(+) binding site.

Belongs to the shikimate dehydrogenase family. Homodimer.

The catalysed reaction is shikimate + NADP(+) = 3-dehydroshikimate + NADPH + H(+). It functions in the pathway metabolic intermediate biosynthesis; chorismate biosynthesis; chorismate from D-erythrose 4-phosphate and phosphoenolpyruvate: step 4/7. Functionally, involved in the biosynthesis of the chorismate, which leads to the biosynthesis of aromatic amino acids. Catalyzes the reversible NADPH linked reduction of 3-dehydroshikimate (DHSA) to yield shikimate (SA). The sequence is that of Shikimate dehydrogenase (NADP(+)) from Methanococcus maripaludis (strain DSM 14266 / JCM 13030 / NBRC 101832 / S2 / LL).